The following is a 2227-amino-acid chain: Genome polyprotein (2227 aa).

Short sequence motifs ((L)YPX(n)L motif) lie at residues Tyr167 to Leu171 and Tyr200 to Leu205. Positions Met766–Gln836 are involved in P1-2A pentamerization. Residues Thr1011 to Ile1031 traverse the membrane as a helical segment. The interval Ile1043–Glu1070 is membrane-penetrating ability. The stretch at Lys1127–Phe1152 forms a coiled coil. The region spanning His1204 to Met1366 is the SF3 helicase domain. Gly1230 to Ser1237 provides a ligand contact to ATP. Residues Trp1462–Tyr1482 form a helical membrane-spanning segment. Tyr1499 is subject to O-(5'-phospho-RNA)-tyrosine. A Peptidase C3 domain is found at Asp1514–Phe1728. Active-site for protease 3C activity residues include His1563, Asp1603, and Cys1691. Residues Asp1976–Asn2097 form the RdRp catalytic domain.

Belongs to the picornaviridae polyprotein family. In terms of assembly, homodimer. Homomultimer; probably interacts with membranes in a multimeric form. Seems to assemble into amyloid-like fibers. As to quaternary structure, homodimer. Monomer. Interacts with protein 3CD. Interacts with host ACBD3. In terms of assembly, interacts with protein 3AB. As to quaternary structure, interacts with human MAVS. Homodimer; disulfide-linked. In terms of assembly, homopentamer. Homooligomer. As to quaternary structure, interacts with capsid protein VP2. Interacts with capsid protein VP3. Interacts with capsid protein VP1. Interacts with capsid protein VP3. In terms of assembly, interacts with capsid protein VP1. Interacts with capsid protein VP2. Specific enzymatic cleavages by viral protease in vivo yield a variety of precursors and mature proteins. Polyprotein processing intermediates are produced, such as P1-2A which is a functional precursor of the structural proteins, VP0 which is a VP4-VP2 precursor, VP1-2A precursor, 3ABC precursor which is a stable and catalytically active precursor of 3A, 3B and 3C proteins, 3AB and 3CD precursors. The assembly signal 2A is removed from VP1-2A by a host protease, possibly host Cathepsin L. This cleavage occurs over a region of 3 amino-acids probably generating VP1 proteins with heterogeneous C-termini. Post-translationally, during virion maturation, immature virions are rendered infectious following cleavage of VP0 into VP4 and VP2. This maturation seems to be an autocatalytic event triggered by the presence of RNA in the capsid and is followed by a conformational change of the particle. In terms of processing, the assembly signal 2A is removed from VP1-2A by a host protease, possibly host Cathepsin L in naked virions. This cleavage does not occur in enveloped virions. This cleavage occurs over a region of 3 amino-acids probably generating VP1 proteins with heterogeneous C-termini. VPg is uridylylated prior to priming replication into VPg-pUpU. Post-translationally, unlike other picornaviruses, does not seem to be myristoylated.

Its subcellular location is the virion. The protein resides in the host endosome. It is found in the host multivesicular body. It localises to the host membrane. The protein localises to the host mitochondrion outer membrane. Its subcellular location is the host cytoplasm. The protein resides in the host cytoplasmic vesicle membrane. The enzyme catalyses RNA(n) + a ribonucleoside 5'-triphosphate = RNA(n+1) + diphosphate. It catalyses the reaction a ribonucleoside 5'-triphosphate + H2O = a ribonucleoside 5'-diphosphate + phosphate + H(+). The catalysed reaction is Selective cleavage of Gln-|-Gly bond in the poliovirus polyprotein. In other picornavirus reactions Glu may be substituted for Gln, and Ser or Thr for Gly.. In terms of biological role, capsid proteins VP1, VP2, and VP3 form a closed capsid enclosing the viral positive strand RNA genome. All these proteins contain a beta-sheet structure called beta-barrel jelly roll. Together they form an icosahedral capsid (T=3) composed of 60 copies of each VP1, VP2, and VP3, with a diameter of approximately 300 Angstroms. VP1 is situated at the 12 fivefold axes, whereas VP2 and VP3 are located at the quasi-sixfold axes. The naked capsid interacts with the host receptor HAVCR1 to provide virion attachment to and probably entry into the target cell. Its function is as follows. VP0 precursor is a component of the immature procapsids. Functionally, plays a role in the assembly of the 12 pentamers into an icosahedral structure. Has not been detected in mature virions, supposedly owing to its small size. Precursor component of immature procapsids that corresponds to an extended form of the structural protein VP1. After maturation, possibly by the host Cathepsin L, the assembly signal 2A is cleaved to give rise to the mature VP1 protein. In terms of biological role, functions as a viroporin. Affects membrane integrity and causes an increase in membrane permeability. Involved in host intracellular membrane rearrangements probably to give rise to the viral factories. Does not disrupt calcium homeostasis or glycoprotein trafficking. Antagonizes the innate immune response of the host by suppressing IFN-beta synthesis, which it achieves by interfering with the RIG-I/IFIH1 pathway. Its function is as follows. Affects membrane integrity and causes an increase in membrane permeability. Functionally, associates with and induces structural rearrangements of intracellular membranes. Displays RNA-binding activity. The precursor 3ABC is targeted to the mitochondrial membrane where protease 3C activity cleaves and inhibits the host antiviral protein MAVS, thereby disrupting activation of IRF3 through the IFIH1/MDA5 pathway. In vivo, the protease activity of 3ABC precursor is more efficient in cleaving the 2BC precursor than that of protein 3C. The 3ABC precursor may therefore play a role in the proteolytic processing of the polyprotein. Possible viroporin. In terms of biological role, interacts with the 3CD precursor and with RNA structures found at both the 5'- and 3'-termini of the viral genome. Since the 3AB precursor contains the hydrophobic domain 3A, it probably anchors the whole viral replicase complex to intracellular membranes on which viral RNA synthesis occurs. Its function is as follows. May serve as membrane anchor to the 3AB and 3ABC precursors via its hydrophobic domain. May interact with RNA. Functionally, acts as a primer for viral RNA replication and remains covalently bound to viral genomic RNA. VPg is uridylylated prior to priming replication into VPg-pUpU. The VPg-pUpU is then used as primer on the genomic RNA poly(A) by the RNA-dependent RNA polymerase to replicate the viral genome. Cysteine protease that generates mature viral proteins from the precursor polyprotein. In addition to its proteolytic activity, it binds to viral RNA, and thus influences viral genome replication. RNA and substrate bind cooperatively to the protease. Cleaves IKBKG/NEMO to impair innate immune signaling. Cleaves host PABPC1 which may participate in the switch of viral translation to RNA synthesis. In terms of biological role, interacts with the 3AB precursor and with RNA structures found at both the 5'- and 3'-termini of the viral genome. Disrupts TLR3 signaling by degrading the host adapter protein TICAM1/TRIF. Its function is as follows. RNA-directed RNA polymerase 3D-POL replicates genomic and antigenomic RNA by recognizing replications specific signals. The chain is Genome polyprotein from Human hepatitis A virus genotype IA (isolate H2) (HHAV).